Consider the following 122-residue polypeptide: MIQPQTLLNVADNSGARELMCIRIIGASNRRYAHIGDVIVAVIKEAVPNMSLERSEVVRAVIVRTCKELKRDNGMIIRYDDNAAVVIDQEGNPKGTRVFGAIARELRHLNFTKIVSLAPEVL.

The protein belongs to the universal ribosomal protein uL14 family. Part of the 50S ribosomal subunit.

It is found in the plastid. It localises to the chloroplast. In terms of biological role, binds to 23S rRNA. The polypeptide is Large ribosomal subunit protein uL14c (Acorus calamus (Sweet flag)).